Here is a 651-residue protein sequence, read N- to C-terminus: J domain-containing protein required for chloroplast accumulation response 1 (651 aa).

Residues 1–17 (MQTLPSSETVLLGSNSA) show a composition bias toward polar residues. 5 disordered regions span residues 1–56 (MQTL…TRHS), 114–138 (GSRILSPAHKPESSSGTSSPSQFSL), 156–176 (LNKNKETVSSSPLSRTSSKAD), 250–291 (KLGK…TDLK), and 308–526 (KPLD…IDEP). Ser56 is subject to Phosphoserine. A compositionally biased stretch (low complexity) spans 126 to 137 (SSSGTSSPSQFS). 6 stretches are compositionally biased toward basic and acidic residues: residues 250–259 (KLGKNEEGDG), 281–291 (TKEEKTETDLK), 337–357 (IFHEEDERQDEKIVSEREVRK), 405–416 (VGKDGVKGKVSD), 441–456 (RAKETPKTDIIHDGSN), and 488–497 (QKKDSDRESM). A coiled-coil region spans residues 532–562 (DVEDITQDENKMEEANKDAEEIKNIDAKIRK). The 66-residue stretch at 586 to 651 (SGWKPVPLMD…WDHFNTLGPV (66 aa)) folds into the J domain.

Expressed in leaves and stems, but not in roots.

Its subcellular location is the cytoplasm. Its function is as follows. Required for chloroplast photorelocation movement; chloroplast accumulation upon low blue light and for chloroplast movement to the bottom of cells in darkness, by modulating chloroplast actin (Cp-actin) filaments distribution, appearance and disappearance. May mediate a slight resistance to aluminum in root hair cells. The polypeptide is J domain-containing protein required for chloroplast accumulation response 1 (JAC1) (Arabidopsis thaliana (Mouse-ear cress)).